A 363-amino-acid polypeptide reads, in one-letter code: Peroxisomal (S)-2-hydroxyacid oxidase GLO3 (363 aa).

The FMN hydroxy acid dehydrogenase domain maps to 1–357 (MDQIVNVDEF…TRNHVRTENE (357 aa)). FMN contacts are provided by residues 78 to 80 (PTG), Ser107, 128 to 130 (QIY), and Thr156. Tyr130 contributes to the a 2-oxocarboxylate binding site. Arg165 serves as a coordination point for a 2-oxocarboxylate. Residues Lys228 and Ser250 each contribute to the FMN site. His252 acts as the Proton acceptor in catalysis. Residue Arg255 coordinates a 2-oxocarboxylate. FMN is bound by residues 283 to 287 (DGGVR) and 306 to 307 (GR). A Microbody targeting signal motif is present at residues 361–363 (SML).

This sequence belongs to the FMN-dependent alpha-hydroxy acid dehydrogenase family. As to quaternary structure, homotetramer. It depends on FMN as a cofactor.

Its subcellular location is the peroxisome. It catalyses the reaction a (2S)-2-hydroxycarboxylate + O2 = a 2-oxocarboxylate + H2O2. It carries out the reaction 2-hydroxy-4-methylpentanoate + O2 = 4-methyl-2-oxopentanoate + H2O2. The enzyme catalyses 2-hydroxyhexanoate + O2 = 2-oxohexanoate + H2O2. The catalysed reaction is 2-hydroxyoctanoate + O2 = 2-oxooctanoate + H2O2. Oxidase that catalyzes the oxidation of a broad range of 2-hydroxyacids to the corresponding 2-oxoacids, with a reduction of O2 to H2O2. Displays the highest activity with leucic acid (2-hydroxy-4-methylpentanoate) and has intermediate activity with 2-hydroxyhexanoate and 2-hydroxyoctanote. Shows lower activity with 2-hydroxydodecanoate, valic acid, and isoleucic acid and extremely low activity with glycolate and L-lactate. Cannot use 2-hydroxyhexadecanoate or D-lactate as substrates. May be involved in the conversion or degradation of 2-hydroxyacids produced during the metabolism of fatty acids or amino acids. This chain is Peroxisomal (S)-2-hydroxyacid oxidase GLO3 (GLO3), found in Arabidopsis thaliana (Mouse-ear cress).